Reading from the N-terminus, the 515-residue chain is Mucin-like protein Glc1.8b (515 aa).

The N-terminal stretch at 1-20 (MSQITLIILVLAIGFSCTKS) is a signal peptide. At 21 to 467 (HPINSTRDGE…ANDIKKPAFP (447 aa)) the chain is on the extracellular side. N24, N45, N51, N60, N85, N93, N102, N123, N129, N138, N180, N201, N207, N216, N258, N279, N285, N294, N319, N327, N336, N357, N363, N372, N397, N405, N413, N434, and N441 each carry an N-linked (GlcNAc...) asparagine; by host glycan. The disordered stretch occupies residues 80-114 (SKKDENITGQSEINTSAKSQPINSTRDGEDSGTDL). Over residues 86–104 (ITGQSEINTSAKSQPINST) the composition is skewed to polar residues. A disordered region spans residues 314 to 358 (SKKDENITGQSEINTSAKSQPINSTRDGEDSGTDLKNLLTDPANT). Positions 320 to 338 (ITGQSEINTSAKSQPINST) are enriched in polar residues. Residues 393 to 413 (RKDENVTGQSEFNISTNSNLN) are disordered. Residues 468 to 488 (YCIILITFQIVTVGMIIYLVF) form a helical membrane-spanning segment. Residues 489–515 (RTMRKPCQSERAIPLNSFGFGNNSSYE) are Cytoplasmic-facing.

Belongs to the polydnaviridae Glc1.8 protein family.

Its subcellular location is the host membrane. Involved in suppression of the insect cellular immune response. Inhibits host hemocyte adhesion and phagocytosis. This chain is Mucin-like protein Glc1.8b (O16), found in Microplitis demolitor (Parasitoid wasp).